Here is a 525-residue protein sequence, read N- to C-terminus: Protein ea59 (525 aa).

The sequence is that of Protein ea59 (ea59) from Escherichia coli (Bacteriophage lambda).